Reading from the N-terminus, the 1241-residue chain is Intraflagellar transport protein 122 homolog (1241 aa).

WD repeat units lie at residues 10–50, 51–91, 93–129, and 131–169; these read KAEH…QPLK, GHKD…LKYT, NDAI…VSKH, and SSSK…KVKI. A disordered region spans residues 222 to 246; it reads VYSSQGSEAEEEEPEEEDDSPRDDN. Over residues 229–242 the composition is skewed to acidic residues; the sequence is EAEEEEPEEEDDSP. WD repeat units follow at residues 278 to 317, 319 to 359, and 512 to 551; these read ALNF…LGTV, EQNS…HGLY, and KQAT…LLFQ.

Component of the IFT complex A (IFT-A) complex. IFT-A complex is divided into a core subcomplex composed of IFT122:IFT140:WDR19 which is associated with TULP3 and a peripheral subcomplex composed of IFT43:WDR35:TTC21B. Interacts with IFT43:WDR35; the interaction connects the 2 IFT-A subcomplexes. Interacts with IFTAP; the interaction associates IFTAP with IFT-A complex. In terms of tissue distribution, expressed in many tissues. Predominant expression in testis and pituitary.

The protein localises to the cell projection. It localises to the cilium. It is found in the cytoplasm. Its subcellular location is the cytoskeleton. The protein resides in the cilium basal body. Functionally, as a component of the IFT complex A (IFT-A), a complex required for retrograde ciliary transport and entry into cilia of G protein-coupled receptors (GPCRs), it is required in ciliogenesis and ciliary protein trafficking. Involved in cilia formation during neuronal patterning. Acts as a negative regulator of Shh signaling. Required to recruit TULP3 to primary cilia. The chain is Intraflagellar transport protein 122 homolog from Homo sapiens (Human).